The sequence spans 266 residues: uncharacterized protein (266 aa).

This is an uncharacterized protein from Mycobacterium tuberculosis (strain CDC 1551 / Oshkosh).